Consider the following 1268-residue polypeptide: Vigilin (1268 aa).

S2 is modified (N-acetylserine). T8 bears the Phosphothreonine mark. A phosphoserine mark is found at S11, S31, and S35. KH domains are found at residues 158 to 229 (PKEH…RLEV), 230 to 302 (EKAF…AVEV), 303 to 371 (KKSQ…SVAA), 372 to 442 (PSWL…EINI), 443 to 514 (DHKF…DLII), 515 to 588 (EQRF…SVPI), 589 to 660 (FKQF…EVSI), 661 to 734 (PAKL…DIRA), 735 to 807 (KPEY…SMLV), 808 to 880 (DPKH…ECAI), 881 to 979 (PQKF…EVEV), 980 to 1059 (PFDL…SVTV), 1060 to 1134 (DPKY…DVPL), and 1135 to 1209 (DHRV…ALQV). Residues T295 and T296 each carry the phosphothreonine modification. A Phosphoserine modification is found at S317. Y437 carries the post-translational modification Phosphotyrosine. Residue S645 is modified to Phosphoserine. The disordered stretch occupies residues 910-947 (PDREENPVHSTEPAVQENGDEAGEGREAKDSDPGSPRR). A compositionally biased stretch (basic and acidic residues) spans 932–947 (GEGREAKDSDPGSPRR). An N6-acetyllysine modification is found at K991. Over residues 1237–1249 (SSEKAPDMSSSEE) the composition is skewed to polar residues. Residues 1237-1268 (SSEKAPDMSSSEEFPSFGAQVAPKTLPWGPKR) form a disordered region. 2 positions are modified to phosphoserine: S1247 and S1252.

The protein localises to the cytoplasm. It is found in the nucleus. Functionally, appears to play a role in cell sterol metabolism. It may function to protect cells from over-accumulation of cholesterol. This chain is Vigilin (HDLBP), found in Pongo abelii (Sumatran orangutan).